Consider the following 282-residue polypeptide: Energy-coupling factor transporter ATP-binding protein EcfA1 (282 aa).

An ABC transporter domain is found at 6 to 243; sequence VTVKHLSFTY…EVLIKSAGLE (238 aa). An ATP-binding site is contributed by 40 to 47; sequence GHNGSGKS.

This sequence belongs to the ABC transporter superfamily. Energy-coupling factor EcfA family. As to quaternary structure, forms a stable energy-coupling factor (ECF) transporter complex composed of 2 membrane-embedded substrate-binding proteins (S component), 2 ATP-binding proteins (A component) and 2 transmembrane proteins (T component).

Its subcellular location is the cell membrane. Its function is as follows. ATP-binding (A) component of a common energy-coupling factor (ECF) ABC-transporter complex. Unlike classic ABC transporters this ECF transporter provides the energy necessary to transport a number of different substrates. The protein is Energy-coupling factor transporter ATP-binding protein EcfA1 of Lactobacillus johnsonii (strain CNCM I-12250 / La1 / NCC 533).